The sequence spans 535 residues: RNA-splicing ligase RtcB homolog 1 (535 aa).

Basic residues predominate over residues 1-16; the sequence is MAKSRYSRKNKGKKLQ. The interval 1 to 29 is disordered; that stretch reads MAKSRYSRKNKGKKLQRVQENTVSTEEKS. Residues D152, C155, H260, H292, and H383 each contribute to the Mn(2+) site. A GMP-binding site is contributed by 259 to 263; sequence NHYLE. GMP is bound by residues 383–384, 432–435, S439, 458–461, and K534; these read HN, GGSM, and HGAG. Catalysis depends on H458, which acts as the GMP-histidine intermediate.

This sequence belongs to the RtcB family. Catalytic component of the tRNA-splicing ligase complex. Requires Mn(2+) as cofactor.

It carries out the reaction a 3'-end 3'-phospho-ribonucleotide-RNA + a 5'-end dephospho-ribonucleoside-RNA + GTP = a ribonucleotidyl-ribonucleotide-RNA + GMP + diphosphate. The enzyme catalyses a 3'-end 2',3'-cyclophospho-ribonucleotide-RNA + a 5'-end dephospho-ribonucleoside-RNA + GTP + H2O = a ribonucleotidyl-ribonucleotide-RNA + GMP + diphosphate + H(+). Catalytic subunit of the tRNA-splicing ligase complex that acts by directly joining spliced tRNA halves to mature-sized tRNAs by incorporating the precursor-derived splice junction phosphate into the mature tRNA as a canonical 3',5'-phosphodiester. May act as an RNA ligase with broad substrate specificity, and may function toward other RNAs. This Entamoeba dispar (strain ATCC PRA-260 / SAW760) protein is RNA-splicing ligase RtcB homolog 1.